Reading from the N-terminus, the 212-residue chain is Ribosomal RNA small subunit methyltransferase G (212 aa).

S-adenosyl-L-methionine is bound by residues Gly-80, Leu-85, 131–132, and Arg-146; that span reads AE.

This sequence belongs to the methyltransferase superfamily. RNA methyltransferase RsmG family.

It localises to the cytoplasm. The catalysed reaction is guanosine(527) in 16S rRNA + S-adenosyl-L-methionine = N(7)-methylguanosine(527) in 16S rRNA + S-adenosyl-L-homocysteine. In terms of biological role, specifically methylates the N7 position of guanine in position 527 of 16S rRNA. The sequence is that of Ribosomal RNA small subunit methyltransferase G from Xylella fastidiosa (strain M23).